We begin with the raw amino-acid sequence, 204 residues long: DNA-binding transcriptional activator EvgA (204 aa).

The 116-residue stretch at 2 to 117 (NAIIIDDHPL…NIIAAIEAAK (116 aa)) folds into the Response regulatory domain. 4-aspartylphosphate is present on Asp52. Residues 137–202 (DQQKLDSLSK…DLYTFAQRNK (66 aa)) enclose the HTH luxR-type domain. The segment at residues 161–180 (NNDIAEKMFISNKTVSTYKS) is a DNA-binding region (H-T-H motif).

In terms of assembly, homodimer. Post-translationally, phosphorylated by EvgS.

Its subcellular location is the cytoplasm. Member of the two-component regulatory system EvgS/EvgA. Regulates the expression of emrKY operon and yfdX. Also seems to control expression of at least one other multidrug efflux operon. This is DNA-binding transcriptional activator EvgA (evgA) from Escherichia coli O157:H7.